The following is a 358-amino-acid chain: Anhydro-N-acetylmuramic acid kinase (358 aa).

9–16 (GTSLDGVD) contacts ATP.

The protein belongs to the anhydro-N-acetylmuramic acid kinase family.

The catalysed reaction is 1,6-anhydro-N-acetyl-beta-muramate + ATP + H2O = N-acetyl-D-muramate 6-phosphate + ADP + H(+). It participates in amino-sugar metabolism; 1,6-anhydro-N-acetylmuramate degradation. Its pathway is cell wall biogenesis; peptidoglycan recycling. In terms of biological role, catalyzes the specific phosphorylation of 1,6-anhydro-N-acetylmuramic acid (anhMurNAc) with the simultaneous cleavage of the 1,6-anhydro ring, generating MurNAc-6-P. Is required for the utilization of anhMurNAc either imported from the medium or derived from its own cell wall murein, and thus plays a role in cell wall recycling. The polypeptide is Anhydro-N-acetylmuramic acid kinase (Acidiphilium cryptum (strain JF-5)).